A 240-amino-acid chain; its full sequence is uncharacterized protein (240 aa).

Aspartate 66 (proton acceptor) is an active-site residue. The active site involves aspartate 129. The Proton acceptor role is filled by histidine 131.

This sequence belongs to the glucosamine/galactosamine-6-phosphate isomerase family.

This is an uncharacterized protein from Escherichia coli (strain K12).